A 128-amino-acid chain; its full sequence is Modulator protein MzrA (128 aa).

Over 1-11 the chain is Cytoplasmic; the sequence is MMVMKRPSLRQ. A helical membrane pass occupies residues 12 to 32; it reads FSWLLGGSLLLGALFWLWLAV. Over 33 to 128 the chain is Periplasmic; sequence QQQEATLAIR…RLRDAPHRLG (96 aa).

It belongs to the MzrA family. Interacts with EnvZ.

The protein localises to the cell inner membrane. Functionally, modulates the activity of the EnvZ/OmpR two-component regulatory system, probably by directly modulating EnvZ enzymatic activity and increasing stability of phosphorylated OmpR. This is Modulator protein MzrA from Klebsiella pneumoniae subsp. pneumoniae (strain ATCC 700721 / MGH 78578).